A 618-amino-acid polypeptide reads, in one-letter code: Mitochondrial Rho GTPase 2 (618 aa).

Residues 1–592 (MRRDVRILLL…ELHPSSFWLR (592 aa)) are Cytoplasmic-facing. Residues 2–168 (RRDVRILLLG…FYYAQKAVLH (167 aa)) enclose the Miro 1 domain. Residues Gly16, Lys17, Thr18, and Ser19 each coordinate GTP. Thr18 lines the Mg(2+) pocket. Pro35 and Asp57 together coordinate Mg(2+). Ser59 is a binding site for GTP. Lys96 is covalently cross-linked (Glycyl lysine isopeptide (Lys-Gly) (interchain with G-Cter in ubiquitin)). GTP-binding residues include Asn118, Lys119, Asp121, Ala149, and Lys150. Lys119 participates in a covalent cross-link: Glycyl lysine isopeptide (Lys-Gly) (interchain with G-Cter in ubiquitin). Lys164 participates in a covalent cross-link: Glycyl lysine isopeptide (Lys-Gly) (interchain with G-Cter in ubiquitin). EF-hand domains lie at 184–219 (ACAQALTRIFRLSDQDLDQALSDEELNAFQKSCFGH) and 304–339 (LGYQFVQRVFEKHDQDRDGALSPVELQSLFSVFPAA). Ca(2+)-binding residues include Asp197, Asp199, Asp201, Glu208, Asp317, Asp319, Asp321, and Glu328. Residues 414–576 (RSVLLCKVVG…FTQLATMAAF (163 aa)) enclose the Miro 2 domain. Residues Gly426, Gly428, Lys429, Ser430, and Ala431 each coordinate GTP. The GDP site is built by Gly426, Gly428, Lys429, Ser430, and Ala431. Ser430 lines the Mg(2+) pocket. Mg(2+) is bound at residue Glu471. Positions 525, 527, and 556 each coordinate GTP. GDP contacts are provided by Lys525, Asp527, and Cys556. The chain crosses the membrane as a helical; Anchor for type IV membrane protein span at residues 593–615 (GLLGVVGAAVAAVLSFSLYRVLV). Residues 616–618 (KSQ) are Mitochondrial intermembrane-facing.

It belongs to the mitochondrial Rho GTPase family. Homodimer. Interacts with the kinesin-binding proteins TRAK1/OIP106 and TRAK2/GRIF1, forming a link between mitochondria and the trafficking apparatus of the microtubules. Interacts with ARMCX3. Found in a complex with KIF5B, OGT, RHOT1 and TRAK1. Post-translationally, ubiquitinated by PRKN in a PINK1-dependent manner, leading to its degradation. As to expression, ubiquitously expressed. Highly expressed in heart, liver, skeletal muscle, kidney and pancreas.

The protein resides in the mitochondrion outer membrane. The enzyme catalyses GTP + H2O = GDP + phosphate + H(+). It carries out the reaction ATP + H2O = ADP + phosphate + H(+). It catalyses the reaction UTP + H2O = UDP + phosphate + H(+). Functionally, atypical mitochondrial nucleoside-triphosphatase (NTPase) involved in mitochondrial trafficking. Probably involved in control of anterograde transport of mitochondria and their subcellular distribution. Can hydrolyze GTP. Can hydrolyze ATP and UTP. The chain is Mitochondrial Rho GTPase 2 (RHOT2) from Homo sapiens (Human).